We begin with the raw amino-acid sequence, 424 residues long: Caspase-2 (424 aa).

A propeptide spanning residues 1–140 (MLGACGMQRY…IVEHSLDSGD (140 aa)) is cleaved from the precursor. The CARD domain occupies 7 to 96 (MQRYHQEALK…QHLAEMILKT (90 aa)). Catalysis depends on residues His-248 and Cys-291. Basic and acidic residues predominate over residues 296 to 310 (TDRGVDQRDGKERSD). A disordered region spans residues 296 to 325 (TDRGVDQRDGKERSDSPGCEESDANKEENL).

This sequence belongs to the peptidase C14A family. Heterotetramer that consists of two anti-parallel arranged heterodimers, each one formed by a p18 subunit and a p12 subunit.

The catalysed reaction is Strict requirement for an Asp residue at P1, with 316-Asp being essential for proteolytic activity and has a preferred cleavage sequence of Val-Asp-Val-Ala-Asp-|-.. Involved in the activation cascade of caspases responsible for apoptosis execution. Might function by either activating some proteins required for cell death or inactivating proteins necessary for cell survival. This is Caspase-2 (CASP2) from Gallus gallus (Chicken).